The following is a 130-amino-acid chain: MKKNGILNSHIAKVLADLGHTDTIVIADCGLPIPEGPVKIDLSLTIGTPSFQEVTSLLLQEMAVEHITVASEIQEANERDHLFLKKAFSKPLHDVDHETFKDMTKQAKAVIRTGEATPYANCILHAGVIF.

The Proton donor role is filled by His-20. Residues Asp-28, His-97, and 119–121 (YAN) contribute to the substrate site.

The protein belongs to the RbsD / FucU family. RbsD subfamily. In terms of assembly, homodecamer.

The protein localises to the cytoplasm. The catalysed reaction is beta-D-ribopyranose = beta-D-ribofuranose. The protein operates within carbohydrate metabolism; D-ribose degradation; D-ribose 5-phosphate from beta-D-ribopyranose: step 1/2. In terms of biological role, catalyzes the interconversion of beta-pyran and beta-furan forms of D-ribose. The sequence is that of D-ribose pyranase from Bacillus pumilus (strain SAFR-032).